A 490-amino-acid chain; its full sequence is Cytochrome P450 monooxygenase aclL (490 aa).

A helical transmembrane segment spans residues 1 to 21 (MLFSLGPLTIVYGLVIFVVAK). A glycan (N-linked (GlcNAc...) asparagine) is linked at N176. Heme is bound at residue C434.

The protein belongs to the cytochrome P450 family. Requires heme as cofactor.

The protein localises to the membrane. The protein operates within mycotoxin biosynthesis. Its function is as follows. Cytochrome P450 monooxygenase; part of the gene cluster that mediates the biosynthesis of aspirochlorine (or antibiotic A30641), an unusual halogenated spiro compound with distinctive antifungal properties due to selective inhibition of protein biosynthesis, and which is also active against bacteria, viruses, and murine tumor cells. The non-ribosomal peptide synthetase (NRPS) aclP is responsible the formation of the diketopiperazine (DKP) core from the condensation of 2 phenylalanine residues. One Phe residue is tailored into chlorotyrosine by hydroxylation and chlorination, whereas the second Phe undergoes an unprecedented C-C bond cleavage to be converted into glycine. After formation of the DKP, sulfur is incorporated into the DKP by conjugation with glutathione by aclG, followed by its stepwise degradation to the thiol by aclI, aclJ and aclK, and the dithiol oxidation by aclT. In addition, oxygenases (aclB, aclC, aclL and aclO) and O-methyltransferases (aclM and aclU) act as tailoring enzymes to produce the intermediate dechloroaspirochlorine. Ultimately, chlorination of dechloroaspirochlorine by the halogenase aclH is the last step in the aspirochlorine pathway. In Aspergillus oryzae (strain ATCC 42149 / RIB 40) (Yellow koji mold), this protein is Cytochrome P450 monooxygenase aclL.